The following is a 256-amino-acid chain: Protein YIPF7 (256 aa).

The Cytoplasmic segment spans residues 1–125 (MSNLAQFDSD…VDGSIMNETD (125 aa)). 2 stretches are compositionally biased toward polar residues: residues 18–31 (IDNQ…SNAY) and 38–48 (RKQQAGEQPQP). A disordered region spans residues 18-48 (IDNQEQSGNDSNAYGNLYGSRKQQAGEQPQP). Residues 126–146 (LTGPILFCVALGATLLLAGKV) traverse the membrane as a helical segment. Position 147 (Q147) is a topological domain, extracellular. The chain crosses the membrane as a helical span at residues 148–168 (FGYVYGMSAIGCLVIHALLNL). Over 169 to 172 (MSSS) the chain is Cytoplasmic. The chain crosses the membrane as a helical span at residues 173-193 (GVSYGCVASVLGYCLLPMVIL). Topologically, residues 194 to 196 (SGC) are extracellular. A helical membrane pass occupies residues 197 to 217 (AMFFSLQGIFGIMSSLVIIGW). The Cytoplasmic portion of the chain corresponds to 218 to 235 (CSLSASKIFIAALHMEGQ). Residues 236–256 (QLLVAYPCAILYGLFALLTIF) traverse the membrane as a helical segment.

The protein belongs to the YIP1 family.

The protein localises to the endoplasmic reticulum membrane. It localises to the golgi apparatus. Its subcellular location is the cis-Golgi network membrane. It is found in the trans-Golgi network membrane. The protein is Protein YIPF7 (YIPF7) of Homo sapiens (Human).